The sequence spans 58 residues: Mastoparan-VT7 (58 aa).

The first 27 residues, 1–27 (MKNTILILFTAFIALLGFFGMSAEALA), serve as a signal peptide directing secretion. 4 AXPX repeats span residues 27-30 (ADPK), 31-34 (ADPL), 35-38 (AGPN), and 41-44 (ADPE). The propeptide occupies 28–45 (DPKADPLAGPNPDADPEA).

The protein belongs to the MCD family. Mastoparan subfamily. Expressed by the venom gland.

It is found in the secreted. The synthetic peptide shows antimicrobial activities against Gram-negative bacteria (but not against all strains tested), Gram-positive bacteria (all strains tested) and the fungi C.albicans (but not C.parapsilosis). Exhibits little hemolytic activity against washed human erythrocytes. This chain is Mastoparan-VT7, found in Vespa tropica (Greater banded hornet).